We begin with the raw amino-acid sequence, 112 residues long: DNA-directed RNA polymerases I and III subunit RPAC2 (112 aa).

It belongs to the archaeal Rpo11/eukaryotic RPB11/RPC19 RNA polymerase subunit family. In terms of assembly, component of the RNA polymerase I (Pol I) and RNA polymerase III (Pol III) complexes consisting of at least 13 and 17 subunits, respectively.

The protein localises to the nucleus. In terms of biological role, DNA-dependent RNA polymerase catalyzes the transcription of DNA into RNA using the four ribonucleoside triphosphates as substrates. Common core component of RNA polymerases I and III which synthesize ribosomal RNA precursors and small RNAs, such as 5S rRNA and tRNAs, respectively. In Danio rerio (Zebrafish), this protein is DNA-directed RNA polymerases I and III subunit RPAC2 (polr1d).